Consider the following 201-residue polypeptide: Imidazoleglycerol-phosphate dehydratase (201 aa).

The protein belongs to the imidazoleglycerol-phosphate dehydratase family.

It localises to the cytoplasm. The enzyme catalyses D-erythro-1-(imidazol-4-yl)glycerol 3-phosphate = 3-(imidazol-4-yl)-2-oxopropyl phosphate + H2O. It functions in the pathway amino-acid biosynthesis; L-histidine biosynthesis; L-histidine from 5-phospho-alpha-D-ribose 1-diphosphate: step 6/9. The polypeptide is Imidazoleglycerol-phosphate dehydratase (Synechococcus sp. (strain CC9902)).